The following is a 137-amino-acid chain: Small ribosomal subunit protein uS12 (137 aa).

The interval 1–26 (MPTINQLVTKGRKRKASKTKSPALNQ) is disordered.

The protein belongs to the universal ribosomal protein uS12 family. Part of the 30S ribosomal subunit. Contacts proteins S8 and S17. May interact with IF1 in the 30S initiation complex.

Its function is as follows. With S4 and S5 plays an important role in translational accuracy. Functionally, interacts with and stabilizes bases of the 16S rRNA that are involved in tRNA selection in the A site and with the mRNA backbone. Located at the interface of the 30S and 50S subunits, it traverses the body of the 30S subunit contacting proteins on the other side and probably holding the rRNA structure together. The combined cluster of proteins S8, S12 and S17 appears to hold together the shoulder and platform of the 30S subunit. The protein is Small ribosomal subunit protein uS12 of Mycoplasmopsis pulmonis (strain UAB CTIP) (Mycoplasma pulmonis).